We begin with the raw amino-acid sequence, 397 residues long: 4-O-methyl-glucuronoyl methylesterase (397 aa).

The first 18 residues, 1–18 (MVHLTSALLVAGAAFAAA), serve as a signal peptide directing secretion. Cystine bridges form between cysteine 31-cysteine 65, cysteine 212-cysteine 347, and cysteine 244-cysteine 319. A GXSYXG catalytic site motif motif is present at residues 211–216 (GCSRNG). Serine 213 functions as the Nucleophile in the catalytic mechanism. Substrate is bound by residues lysine 217, glutamine 259, glutamate 267, and tryptophan 310. Histidine 346 (proton donor/acceptor) is an active-site residue.

The protein belongs to the carbohydrate esterase 15 (CE15) family.

The protein localises to the secreted. It carries out the reaction a 4-O-methyl-alpha-D-glucuronosyl ester derivative + H2O = 4-O-methyl-alpha-D-glucuronate derivative + an alcohol + H(+). Its function is as follows. Glucuronoyl esterase which may play a significant role in biomass degradation, as it is considered to disconnect hemicellulose from lignin through the hydrolysis of the ester bond between 4-O-methyl-D-glucuronic acid residues of glucuronoxylans and aromatic alcohols of lignin. In Thermothelomyces thermophilus (strain ATCC 42464 / BCRC 31852 / DSM 1799) (Sporotrichum thermophile), this protein is 4-O-methyl-glucuronoyl methylesterase (ge2).